The primary structure comprises 378 residues: Probable pectin lyase A (378 aa).

The first 18 residues, 1–18 (MKYASFLALVGFITSTSA), serve as a signal peptide directing secretion. Cystine bridges form between Cys-81–Cys-100 and Cys-90–Cys-224. Arg-254 is a catalytic residue. Residues Cys-321 and Cys-329 are joined by a disulfide bond.

It belongs to the polysaccharide lyase 1 family.

It is found in the secreted. The enzyme catalyses Eliminative cleavage of (1-&gt;4)-alpha-D-galacturonan methyl ester to give oligosaccharides with 4-deoxy-6-O-methyl-alpha-D-galact-4-enuronosyl groups at their non-reducing ends.. In terms of biological role, pectinolytic enzymes consist of four classes of enzymes: pectin lyase, polygalacturonase, pectin methylesterase and rhamnogalacturonase. Among pectinolytic enzymes, pectin lyase is the most important in depolymerization of pectin, since it cleaves internal glycosidic bonds of highly methylated pectins. This Aspergillus clavatus (strain ATCC 1007 / CBS 513.65 / DSM 816 / NCTC 3887 / NRRL 1 / QM 1276 / 107) protein is Probable pectin lyase A (pelA).